Here is a 419-residue protein sequence, read N- to C-terminus: S-adenosylmethionine synthase (419 aa).

An ATP-binding site is contributed by His14. Asp16 provides a ligand contact to Mg(2+). Glu42 is a K(+) binding site. L-methionine-binding residues include Glu55 and Gln98. Residues 98–108 (QSQDIYQGVDR) are flexible loop. ATP contacts are provided by residues 164–166 (DSK), 242–243 (KF), Asp251, 257–258 (RK), Ala274, and Lys278. Residue Asp251 coordinates L-methionine. Lys282 provides a ligand contact to L-methionine.

Belongs to the AdoMet synthase family. As to quaternary structure, homotetramer; dimer of dimers. Mg(2+) serves as cofactor. The cofactor is K(+).

The protein localises to the cytoplasm. The catalysed reaction is L-methionine + ATP + H2O = S-adenosyl-L-methionine + phosphate + diphosphate. Its pathway is amino-acid biosynthesis; S-adenosyl-L-methionine biosynthesis; S-adenosyl-L-methionine from L-methionine: step 1/1. In terms of biological role, catalyzes the formation of S-adenosylmethionine (AdoMet) from methionine and ATP. The overall synthetic reaction is composed of two sequential steps, AdoMet formation and the subsequent tripolyphosphate hydrolysis which occurs prior to release of AdoMet from the enzyme. This chain is S-adenosylmethionine synthase, found in Christiangramia forsetii (strain DSM 17595 / CGMCC 1.15422 / KT0803) (Gramella forsetii).